The chain runs to 359 residues: Outer membrane protein assembly factor BamC (359 aa).

An N-terminal signal peptide occupies residues 1-34 (MASLFDKNSFQMTRLQKTAVAKVVGVSLIMLLAA). Cys-35 carries N-palmitoyl cysteine lipidation. A lipid anchor (S-diacylglycerol cysteine) is attached at Cys-35.

This sequence belongs to the BamC family. In terms of assembly, part of the Bam complex, which is composed of the outer membrane protein BamA, and four lipoproteins BamB, BamC, BamD and BamE.

It localises to the cell outer membrane. In terms of biological role, part of the outer membrane protein assembly complex, which is involved in assembly and insertion of beta-barrel proteins into the outer membrane. This Rahnella sp. (strain Y9602) protein is Outer membrane protein assembly factor BamC.